We begin with the raw amino-acid sequence, 255 residues long: Thiazole synthase (255 aa).

The active-site Schiff-base intermediate with DXP is the K96. Residues G157, 183–184, and 205–206 contribute to the 1-deoxy-D-xylulose 5-phosphate site; these read AG and NT.

It belongs to the ThiG family. In terms of assembly, homotetramer. Forms heterodimers with either ThiH or ThiS.

It is found in the cytoplasm. It catalyses the reaction [ThiS sulfur-carrier protein]-C-terminal-Gly-aminoethanethioate + 2-iminoacetate + 1-deoxy-D-xylulose 5-phosphate = [ThiS sulfur-carrier protein]-C-terminal Gly-Gly + 2-[(2R,5Z)-2-carboxy-4-methylthiazol-5(2H)-ylidene]ethyl phosphate + 2 H2O + H(+). It functions in the pathway cofactor biosynthesis; thiamine diphosphate biosynthesis. Its function is as follows. Catalyzes the rearrangement of 1-deoxy-D-xylulose 5-phosphate (DXP) to produce the thiazole phosphate moiety of thiamine. Sulfur is provided by the thiocarboxylate moiety of the carrier protein ThiS. In vitro, sulfur can be provided by H(2)S. In Bacillus pumilus (strain SAFR-032), this protein is Thiazole synthase.